Reading from the N-terminus, the 425-residue chain is Glutamyl-tRNA reductase (425 aa).

Substrate contacts are provided by residues 47 to 50, serine 107, 112 to 114, and glutamine 118; these read TCNR and EDQ. The active-site Nucleophile is the cysteine 48. 187–192 is a binding site for NADP(+); sequence GAGHMA.

Belongs to the glutamyl-tRNA reductase family. In terms of assembly, homodimer.

It carries out the reaction (S)-4-amino-5-oxopentanoate + tRNA(Glu) + NADP(+) = L-glutamyl-tRNA(Glu) + NADPH + H(+). The protein operates within porphyrin-containing compound metabolism; protoporphyrin-IX biosynthesis; 5-aminolevulinate from L-glutamyl-tRNA(Glu): step 1/2. It functions in the pathway porphyrin-containing compound metabolism; chlorophyll biosynthesis. Functionally, catalyzes the NADPH-dependent reduction of glutamyl-tRNA(Glu) to glutamate 1-semialdehyde (GSA). This chain is Glutamyl-tRNA reductase, found in Roseiflexus castenholzii (strain DSM 13941 / HLO8).